Consider the following 364-residue polypeptide: CCA-adding enzyme (364 aa).

ATP contacts are provided by G19 and R22. The CTP site is built by G19 and R22. Mg(2+) is bound by residues D32 and D34. ATP-binding residues include R102, R148, and R151. Residues R102, R148, and R151 each contribute to the CTP site.

Belongs to the tRNA nucleotidyltransferase/poly(A) polymerase family. Bacterial CCA-adding enzyme type 2 subfamily. Mg(2+) is required as a cofactor.

The enzyme catalyses a tRNA precursor + 2 CTP + ATP = a tRNA with a 3' CCA end + 3 diphosphate. It catalyses the reaction a tRNA with a 3' CCA end + 2 CTP + ATP = a tRNA with a 3' CCACCA end + 3 diphosphate. In terms of biological role, catalyzes the addition and repair of the essential 3'-terminal CCA sequence in tRNAs without using a nucleic acid template. Adds these three nucleotides in the order of C, C, and A to the tRNA nucleotide-73, using CTP and ATP as substrates and producing inorganic pyrophosphate. tRNA 3'-terminal CCA addition is required both for tRNA processing and repair. Also involved in tRNA surveillance by mediating tandem CCA addition to generate a CCACCA at the 3' terminus of unstable tRNAs. While stable tRNAs receive only 3'-terminal CCA, unstable tRNAs are marked with CCACCA and rapidly degraded. The protein is CCA-adding enzyme of Bordetella pertussis (strain Tohama I / ATCC BAA-589 / NCTC 13251).